The chain runs to 208 residues: V-type ATP synthase subunit D (208 aa).

It belongs to the V-ATPase D subunit family.

Its function is as follows. Produces ATP from ADP in the presence of a proton gradient across the membrane. This Chlamydia caviae (strain ATCC VR-813 / DSM 19441 / 03DC25 / GPIC) (Chlamydophila caviae) protein is V-type ATP synthase subunit D.